A 2326-amino-acid polypeptide reads, in one-letter code: Probable voltage-dependent N-type calcium channel subunit alpha-1B (2326 aa).

The Cytoplasmic segment spans residues 1–83 (MARLGNDVPA…DNIIRKYAKR (83 aa)). The interval 17–37 (AGGGRGANRHAGPQAGQRGMY) is disordered. The stretch at 75 to 351 (NIIRKYAKRI…LVLGVLSGEF (277 aa)) is one I repeat. A helical transmembrane segment spans residues 84–107 (ITEWPPFEYMILATIIANCIVLAL). Residues 108-124 (EQHLPDGDKTPMSERLD) are Extracellular-facing. The chain crosses the membrane as a helical span at residues 125 to 145 (DTEPYFIGIFCFEAGIKIIAL). The Cytoplasmic portion of the chain corresponds to 146–156 (GFAFHKGSYLR). The chain crosses the membrane as a helical span at residues 157-175 (NGWNVMDFVVVLTGILTTI). Residues 176–180 (GTDFD) are Extracellular-facing. Residues 181–204 (LRTLRAVRVLRPLKLVSGIPSLQV) traverse the membrane as a helical segment. Residues 205-214 (VLKSIMKAMV) are Cytoplasmic-facing. A helical transmembrane segment spans residues 215–237 (PLLQIGLLLFFAILMFAIIGLEF). Over 238-323 (YMGKFHKTCF…TANDALGNTW (86 aa)) the chain is Extracellular. The N-linked (GlcNAc...) asparagine glycan is linked to Asn271. A helical transmembrane segment spans residues 324-348 (NWLYFIPLIVIGSFFMLNLVLGVLS). Residues 349 to 472 (GEFAKERERV…FFIRRMVKSQ (124 aa)) lie on the Cytoplasmic side of the membrane. The interval 371-388 (QQVEQEFNRYLRWIHIAE) is binding to the beta subunit. Residues 458–702 (EKRFRFFIRR…VFLAIAVDNL (245 aa)) form an II repeat. Residues 473–491 (SFYWIVLCLVGLNTLCVAI) form a helical membrane-spanning segment. Residues 492–501 (VHYDQPPLLT) lie on the Extracellular side of the membrane. A helical membrane pass occupies residues 502–524 (DALYFAEFVFLGLFLTEMSLKMY). At 525–534 (GLGPRNYFHS) the chain is on the cytoplasmic side. Ser534 contributes to the a 1,2-diacyl-sn-glycero-3-phospho-(1D-myo-inositol-4,5-bisphosphate) binding site. Residues 535 to 556 (SFNCFDFGVIVGSIFEVVWTAV) form a helical membrane-spanning segment. Residues 557 to 563 (KPDTSFG) lie on the Extracellular side of the membrane. The helical transmembrane segment at 564 to 576 (ISVLRALRLLRIF) threads the bilayer. A 1,2-diacyl-sn-glycero-3-phospho-(1D-myo-inositol-4,5-bisphosphate) is bound by residues Arg574 and Lys577. The Cytoplasmic segment spans residues 577–594 (KVTKYWNSLRNLVVSLLN). The helical transmembrane segment at 595 to 620 (SMKSIISLLFLLFLFIVVFALLGMQL) threads the bilayer. Topologically, residues 621 to 672 (FGGQFNFEDGTPPTNFDTFPAAILTVFQILTGEDWNEVMYYGIEAHGGVKKG) are extracellular. Residues 673–699 (MFSSVYFIILTLFGNYTLLNVFLAIAV) traverse the membrane as a helical segment. Residues 700–1148 (DNLANAQELT…ACHYIVNLRY (449 aa)) are Cytoplasmic-facing. The interval 793–1048 (SHQIRPDMKT…LQHLPQQPED (256 aa)) is disordered. Basic and acidic residues-rich tracts occupy residues 796–808 (IRPD…DRPL), 854–879 (KLGE…DDKR), 886–908 (SKET…SHEG), 935–979 (HGTE…EGAE), and 994–1011 (SEEK…VLRE). Polar residues predominate over residues 1020-1032 (TQPSQDSGTQGNV). One copy of the III repeat lies at 1134-1416 (NPVRRACHYI…IFVALIIITF (283 aa)). The chain crosses the membrane as a helical span at residues 1149-1167 (FEMCILLVITMSSIALAAE). Topologically, residues 1168–1175 (DPVQGDAP) are extracellular. The helical transmembrane segment at 1176 to 1200 (RNNVLKYLDYVFTGVFTFEMVIKMI) threads the bilayer. The Cytoplasmic segment spans residues 1201–1214 (NLGLILHPGSYFRD). Residues 1215–1235 (LWNILDFIVVSGALVAFAFTG) traverse the membrane as a helical segment. Over 1236-1241 (SRGKDL) the chain is Extracellular. Residues 1242-1262 (NTIKSLRVLRVLRPLKTIKRL) traverse the membrane as a helical segment. At 1263-1280 (PKLKAVFDCVVNSLKNVL) the chain is on the cytoplasmic side. The helical transmembrane segment at 1281–1300 (NILIVYMLFMFIFAVIAVQL) threads the bilayer. At 1301 to 1387 (FKGKFFYCTD…DQGPSPSYRM (87 aa)) the chain is on the extracellular side. Residues 1388-1413 (EMSIFYVVYFVVFPFFFVNIFVALII) traverse the membrane as a helical segment. Topologically, residues 1414–1468 (ITFQEQGDKVMSDCSLEKNERACIDFAISAKPLTRYMPQNKQTFQYKMWKFVVSP) are cytoplasmic. Residues 1453–1708 (NKQTFQYKMW…LFVAVIMDNF (256 aa)) form an IV repeat. Residues 1469–1487 (PFEYLIMALIALNTIVLMM) traverse the membrane as a helical segment. Over 1488 to 1495 (KFYNAPDP) the chain is Extracellular. A helical membrane pass occupies residues 1496–1520 (YDRMLQYLNILFTFLFSMECVLKLI). At 1521–1530 (GFGVLNYFRD) the chain is on the cytoplasmic side. Residues 1531–1552 (AWNVFDFVTVLGSITDILVTEL) form a helical membrane-spanning segment. The Extracellular segment spans residues 1553 to 1558 (ADSFIN). N-linked (GlcNAc...) asparagine glycosylation occurs at Asn1558. Residues 1559 to 1577 (LSFLRLFRAARLIKLLRQG) traverse the membrane as a helical segment. Topologically, residues 1578 to 1596 (YTIRILLWTFVQSFKALPY) are cytoplasmic. A helical membrane pass occupies residues 1597-1616 (VCLLIAMLFFIYAIIGMQVF). Residues 1617 to 1680 (GNIELDDDGA…IDGDECGSNF (64 aa)) are Extracellular-facing. A helical membrane pass occupies residues 1681–1704 (AYFYFVSFIFFSSFLMLNLFVAVI). The Cytoplasmic segment spans residues 1705–2326 (MDNFEYLTRD…YRETDEDDWC (622 aa)). The EF-hand domain occupies 1721 to 1756 (HHLDEFIRVWAEYDPGARGRITYNDMYEMLRHMCPP). Residues Asp1734, Arg1740, and Asp1745 each contribute to the Ca(2+) site. Over residues 1897–1912 (EEPSSYSTSHKNSVNP) the composition is skewed to polar residues. Disordered stretches follow at residues 1897-1916 (EEPS…LYQG), 1932-1954 (CAEG…KSSS), 2039-2242 (PHHH…SSDP), and 2271-2326 (TTAT…DDWC). The segment covering 1932-1948 (CAEGKKEVPESHPEEAG) has biased composition (basic and acidic residues). Basic residues predominate over residues 2039–2055 (PHHHHHHHRCHHRREKK). Composition is skewed to basic and acidic residues over residues 2056-2069 (QRSL…HADE) and 2077-2104 (QLRD…EKQR). 3 stretches are compositionally biased toward polar residues: residues 2142–2161 (GSGS…STPS), 2275–2289 (GRSP…QPPQ), and 2302–2311 (GRSTGPSTAA).

Belongs to the calcium channel alpha-1 subunit (TC 1.A.1.11) family. As to quaternary structure, multisubunit complex consisting of alpha-1, alpha-2, beta and delta subunits in a 1:1:1:1 ratio. The channel activity is directed by the pore-forming and voltage-sensitive alpha-1 subunit. In many cases, this subunit is sufficient to generate voltage-sensitive calcium channel activity. The auxiliary subunits beta and alpha-2/delta linked by a disulfide bridge regulate the channel activity. In terms of processing, phosphorylated in vitro by CaM-kinase II, PKA, PKC and CGPK. In terms of tissue distribution, expression is higher in the electric lobe than in the forebrain.

The protein localises to the membrane. Its function is as follows. The isoform alpha-1B gives rise to N-type calcium currents. N-type calcium channels belong to the 'high-voltage activated' (HVA) group. This chain is Probable voltage-dependent N-type calcium channel subunit alpha-1B, found in Diplobatis ommata (Ocellated electric ray).